The primary structure comprises 388 residues: Palmitoyltransferase ZDHHC18-B (388 aa).

Positions 1–33 are disordered; that stretch reads MKNREYQQIDPQALATPTPTPPPRSLPEHKPRR. Residues 1–58 are Cytoplasmic-facing; the sequence is MKNREYQQIDPQALATPTPTPPPRSLPEHKPRRARRKWEVFPGKNRFYCDGRIIVARQ. Residues 59–79 form a helical membrane-spanning segment; it reads SGVLPLTLGLILLTSGLFFIF. Over 80–87 the chain is Lumenal; it reads DCPFLVKH. A helical membrane pass occupies residues 88 to 108; that stretch reads LTSCIPAIGGVLFVFVIISLL. The Cytoplasmic portion of the chain corresponds to 109–205; sequence QTSFTDPGIL…GNCVGKRNYR (97 aa). The region spanning 162-212 is the DHHC domain; that stretch reads KYCFTCKIFRPPRTSHCSLCDNCVERFDHHCPWVGNCVGKRNYRFFYTFIV. The active-site S-palmitoyl cysteine intermediate is Cys-192. A helical membrane pass occupies residues 206–226; it reads FFYTFIVSLSFLTAFIFGCVT. Residues 227 to 253 are Lumenal-facing; sequence THLALRSQGGNGLVNALQSSPASALEL. The helical transmembrane segment at 254–274 threads the bilayer; sequence VVCFFSVWSILGLSGFHTYLV. The Cytoplasmic segment spans residues 275–388; sequence AANLTTNEDI…AISMQNHSTA (114 aa).

It belongs to the DHHC palmitoyltransferase family. ERF2/ZDHHC9 subfamily.

Its subcellular location is the golgi apparatus membrane. The enzyme catalyses L-cysteinyl-[protein] + hexadecanoyl-CoA = S-hexadecanoyl-L-cysteinyl-[protein] + CoA. Its function is as follows. Palmitoyltransferase that catalyzes the addition of palmitate onto various protein substrates, such as CGAS, HRAS and LCK. The sequence is that of Palmitoyltransferase ZDHHC18-B from Danio rerio (Zebrafish).